The primary structure comprises 168 residues: ATP synthase subunit b (168 aa).

The helical transmembrane segment at 9–29 (AIPFGTIAYTLFIFLLLLVML) threads the bilayer.

It belongs to the ATPase B chain family. As to quaternary structure, F-type ATPases have 2 components, F(1) - the catalytic core - and F(0) - the membrane proton channel. F(1) has five subunits: alpha(3), beta(3), gamma(1), delta(1), epsilon(1). F(0) has three main subunits: a(1), b(2) and c(10-14). The alpha and beta chains form an alternating ring which encloses part of the gamma chain. F(1) is attached to F(0) by a central stalk formed by the gamma and epsilon chains, while a peripheral stalk is formed by the delta and b chains.

It is found in the cell membrane. Its function is as follows. F(1)F(0) ATP synthase produces ATP from ADP in the presence of a proton or sodium gradient. F-type ATPases consist of two structural domains, F(1) containing the extramembraneous catalytic core and F(0) containing the membrane proton channel, linked together by a central stalk and a peripheral stalk. During catalysis, ATP synthesis in the catalytic domain of F(1) is coupled via a rotary mechanism of the central stalk subunits to proton translocation. Functionally, component of the F(0) channel, it forms part of the peripheral stalk, linking F(1) to F(0). This Bacillus thuringiensis (strain Al Hakam) protein is ATP synthase subunit b.